We begin with the raw amino-acid sequence, 1338 residues long: Aldehyde oxidase 1 (1338 aa).

In terms of domain architecture, 2Fe-2S ferredoxin-type spans 5-92; that stretch reads SELLFYVNGR…GTAVTTVEGI (88 aa). Residues glutamine 113 and cysteine 151 each contribute to the Mo-molybdopterin site. An FAD-binding PCMH-type domain is found at 236-421; sequence FGSERMMWFS…VSVNIPYSRK (186 aa). FAD is bound by residues 264-271, alanine 345, serine 354, histidine 358, aspartate 367, and leucine 411; that span reads VIMGNTSV. Mo-molybdopterin-binding positions include 806 to 807 and methionine 1047; that span reads AF. Position 1068 is a phosphoserine (serine 1068). Mo-molybdopterin contacts are provided by residues 1088-1091, glutamine 1203, and leucine 1268; that span reads GSVV. Residue glutamate 1270 is the Proton acceptor; for azaheterocycle hydroxylase activity of the active site.

The protein belongs to the xanthine dehydrogenase family. Homodimer. Requires [2Fe-2S] cluster as cofactor. FAD is required as a cofactor. Mo-molybdopterin serves as cofactor. In terms of tissue distribution, detected at high levels in liver, also detected in lung, kidney, lacrimal gland and olfactory mucosa.

The protein localises to the cytoplasm. The enzyme catalyses an aldehyde + O2 + H2O = a carboxylate + H2O2 + H(+). It catalyses the reaction retinal + O2 + H2O = retinoate + H2O2 + H(+). Functionally, oxidase with broad substrate specificity, oxidizing aromatic azaheterocycles, such as N1-methylnicotinamide, N-methylphthalazinium and phthalazine, as well as aldehydes, such as benzaldehyde, retinal, pyridoxal, and vanillin. Plays a key role in the metabolism of xenobiotics and drugs containing aromatic azaheterocyclic substituents. Participates in the bioactivation of prodrugs such as famciclovir, catalyzing the oxidation step from 6-deoxypenciclovir to penciclovir, which is a potent antiviral agent. Is probably involved in the regulation of reactive oxygen species homeostasis. May be a prominent source of superoxide generation via the one-electron reduction of molecular oxygen. May also catalyze nitric oxide (NO) production via the reduction of nitrite to NO with NADH or aldehyde as electron donor. May play a role in adipogenesis. The sequence is that of Aldehyde oxidase 1 (AOX1) from Macaca fascicularis (Crab-eating macaque).